A 609-amino-acid polypeptide reads, in one-letter code: MEMIRIFLIYLILKIIIINGENNEYSKGYGVGIVFPGSKCLNYVGDSIGQPLCNNRLFNGGKKIYSTVTLVDNKNISSQELSKIEILKSFEALTFLQDQCDDLLFTQFGLCDLNFSPCVETIPKITPLQNVSLPQRLCKSVCERMVSNCPRLSLKIDCSISFLFPEIGTEYNLTLYGYTENKGLYKVPCIDPTDGYNNISNQMELIQACPYPLLLKNSSDPKYSPNKGYTYLPPTNCVLTCPMPNYTKTQWKRVYDMAKTLSSISFICACYNILTFGILNRKRKSKYNICITLMSTSIALVYLTDIIKFGYGIEEFLCPEPGRSAVQNDAACGITGAMFHFGITYCCCWAMTMSIVLFCSVKRIKLFYFRHFMIGNTIFTIITTVILLSAKKMVAGTGYIECWVRERWFVITLFWLPCGIGLSIGIFCIGGVIHEIYNISKKVNIRESEFILRQIKPFSLVFSVAGSFLYLFIFFFDVERKIDSYKAAVADYVLCLLSGGSEETCFTTGPNYASFFIFYFFIRVFGVLFFSIYGTSRVARDIWSEVVFDEVRSRLSQSESGISRNNSRTDISFGKNNNSKNSNNSKNSNNSKNSNNSDNDSKSIELEKK.

Residues 1–20 (MEMIRIFLIYLILKIIIING) form the signal peptide. Residues 21–259 (ENNEYSKGYG…QWKRVYDMAK (239 aa)) are Extracellular-facing. One can recognise an FZ domain in the interval 35–192 (FPGSKCLNYV…GLYKVPCIDP (158 aa)). Cystine bridges form between Cys40–Cys118, Cys53–Cys111, Cys100–Cys149, and Cys138–Cys189. 6 N-linked (GlcNAc...) asparagine glycosylation sites follow: Asn75, Asn130, Asn172, Asn198, Asn217, and Asn245. Residues 260-280 (TLSSISFICACYNILTFGILN) traverse the membrane as a helical segment. Topologically, residues 281–288 (RKRKSKYN) are cytoplasmic. A helical membrane pass occupies residues 289–309 (ICITLMSTSIALVYLTDIIKF). The Extracellular segment spans residues 310–337 (GYGIEEFLCPEPGRSAVQNDAACGITGA). The helical transmembrane segment at 338 to 358 (MFHFGITYCCCWAMTMSIVLF) threads the bilayer. Topologically, residues 359-365 (CSVKRIK) are cytoplasmic. The chain crosses the membrane as a helical span at residues 366–386 (LFYFRHFMIGNTIFTIITTVI). Over 387-408 (LLSAKKMVAGTGYIECWVRERW) the chain is Extracellular. The chain crosses the membrane as a helical span at residues 409–429 (FVITLFWLPCGIGLSIGIFCI). At 430-457 (GGVIHEIYNISKKVNIRESEFILRQIKP) the chain is on the cytoplasmic side. A helical membrane pass occupies residues 458-478 (FSLVFSVAGSFLYLFIFFFDV). The Extracellular portion of the chain corresponds to 479-511 (ERKIDSYKAAVADYVLCLLSGGSEETCFTTGPN). A helical membrane pass occupies residues 512 to 532 (YASFFIFYFFIRVFGVLFFSI). The Cytoplasmic portion of the chain corresponds to 533-609 (YGTSRVARDI…DSKSIELEKK (77 aa)). Over residues 559 to 570 (ESGISRNNSRTD) the composition is skewed to polar residues. Positions 559 to 609 (ESGISRNNSRTDISFGKNNNSKNSNNSKNSNNSKNSNNSDNDSKSIELEKK) are disordered. A compositionally biased stretch (low complexity) spans 575-598 (KNNNSKNSNNSKNSNNSKNSNNSD). The segment covering 599-609 (NDSKSIELEKK) has biased composition (basic and acidic residues).

This sequence belongs to the G-protein coupled receptor Fz/Smo family.

The protein resides in the membrane. This Dictyostelium discoideum (Social amoeba) protein is Frizzled and smoothened-like protein E (fslE).